The primary structure comprises 511 residues: Tryptophan 5-halogenase PyrH (511 aa).

FAD-binding residues include Gly-10, Ala-13, Ser-36, Val-39, Ile-42, Val-44, and Ala-47. Ser-50 contacts L-tryptophan. The active site involves Lys-75. L-tryptophan-binding residues include Pro-93, Gln-160, and Gln-163. The FAD site is built by Val-195 and Leu-345. Residues Thr-356 and Gly-357 each coordinate chloride. Ile-358 serves as a coordination point for FAD. The L-tryptophan site is built by Gly-450 and Tyr-454.

This sequence belongs to the flavin-dependent halogenase family. Bacterial tryptophan halogenase subfamily. Homodimer.

It carries out the reaction L-tryptophan + FADH2 + chloride + O2 = 5-chloro-L-tryptophan + FAD + 2 H2O. It participates in antibiotic biosynthesis. Involved in the biosynthesis of the antibiotic compound pyrroindomycin B. Catalyzes the chlorination of tryptophan (Trp) at C5 position to yield 5-chloro-L-tryptophan. It is also able to use bromide ions to generate monobrominated Trp, but the brominating activity is only about 75% of the chlorinating activity. In Streptomyces rugosporus, this protein is Tryptophan 5-halogenase PyrH.